A 726-amino-acid polypeptide reads, in one-letter code: Ribonuclease R (726 aa).

The 329-residue stretch at 262-590 (RIDLRHLPFF…LVHRVIKNLL (329 aa)) folds into the RNB domain. The region spanning 642–723 (GDVLTGVISN…NERKIELSLY (82 aa)) is the S1 motif domain.

This sequence belongs to the RNR ribonuclease family. RNase R subfamily. In terms of assembly, monomer.

The protein localises to the cytoplasm. The enzyme catalyses Exonucleolytic cleavage in the 3'- to 5'-direction to yield nucleoside 5'-phosphates.. In terms of biological role, 3'-5' exoribonuclease that releases 5'-nucleoside monophosphates and is involved in maturation of structured RNAs. This chain is Ribonuclease R, found in Buchnera aphidicola subsp. Schizaphis graminum (strain Sg).